The primary structure comprises 199 residues: 5'-deoxynucleotidase YfbR (199 aa).

Substrate-binding positions include R18–W19 and H33. The HD domain maps to V30–Y142. A divalent metal cation is bound by residues H33, H68, and D69. Substrate contacts are provided by residues D69, D77–T80, and D137. Position 137 (D137) interacts with a divalent metal cation.

It belongs to the 5DNU family. Homodimer. A divalent metal cation is required as a cofactor.

Its subcellular location is the cytoplasm. It carries out the reaction a 2'-deoxyribonucleoside 5'-phosphate + H2O = a 2'-deoxyribonucleoside + phosphate. Its function is as follows. Catalyzes the strictly specific dephosphorylation of 2'-deoxyribonucleoside 5'-monophosphates. This chain is 5'-deoxynucleotidase YfbR, found in Escherichia coli O45:K1 (strain S88 / ExPEC).